Reading from the N-terminus, the 549-residue chain is Endoplasmic reticulum mannosyl-oligosaccharide 1,2-alpha-mannosidase (549 aa).

Residues 1–4 (MKNS) lie on the Cytoplasmic side of the membrane. Residues 5–24 (VGISIATIVAIIAAIYYVPW) traverse the membrane as a helical; Signal-anchor for type II membrane protein segment. Residues 25 to 354 (YEHFERKSPG…LLASGSTEGL (330 aa)) are Lumenal-facing. Asparagine 96, asparagine 155, and asparagine 224 each carry an N-linked (GlcNAc...) asparagine glycan. The cysteines at positions 340 and 385 are disulfide-linked. The active-site Proton donor is the glutamate 399. Residues cysteine 468 and cysteine 471 are joined by a disulfide bond. Threonine 525 provides a ligand contact to Ca(2+).

Belongs to the glycosyl hydrolase 47 family. In terms of assembly, homodimer. It depends on Ca(2+) as a cofactor.

It is found in the endoplasmic reticulum membrane. The enzyme catalyses N(4)-(alpha-D-Man-(1-&gt;2)-alpha-D-Man-(1-&gt;2)-alpha-D-Man-(1-&gt;3)-[alpha-D-Man-(1-&gt;2)-alpha-D-Man-(1-&gt;3)-[alpha-D-Man-(1-&gt;2)-alpha-D-Man-(1-&gt;6)]-alpha-D-Man-(1-&gt;6)]-beta-D-Man-(1-&gt;4)-beta-D-GlcNAc-(1-&gt;4)-beta-D-GlcNAc)-L-asparaginyl-[protein] (N-glucan mannose isomer 9A1,2,3B1,2,3) + 4 H2O = N(4)-(alpha-D-Man-(1-&gt;3)-[alpha-D-Man-(1-&gt;3)-[alpha-D-Man-(1-&gt;6)]-alpha-D-Man-(1-&gt;6)]-beta-D-Man-(1-&gt;4)-beta-D-GlcNAc-(1-&gt;4)-beta-D-GlcNAc)-L-asparaginyl-[protein] (N-glucan mannose isomer 5A1,2) + 4 beta-D-mannose. It carries out the reaction N(4)-(alpha-D-Man-(1-&gt;2)-alpha-D-Man-(1-&gt;2)-alpha-D-Man-(1-&gt;3)-[alpha-D-Man-(1-&gt;3)-[alpha-D-Man-(1-&gt;2)-alpha-D-Man-(1-&gt;6)]-alpha-D-Man-(1-&gt;6)]-beta-D-Man-(1-&gt;4)-beta-D-GlcNAc-(1-&gt;4)-beta-D-GlcNAc)-L-asparaginyl-[protein] (N-glucan mannose isomer 8A1,2,3B1,3) + 3 H2O = N(4)-(alpha-D-Man-(1-&gt;3)-[alpha-D-Man-(1-&gt;3)-[alpha-D-Man-(1-&gt;6)]-alpha-D-Man-(1-&gt;6)]-beta-D-Man-(1-&gt;4)-beta-D-GlcNAc-(1-&gt;4)-beta-D-GlcNAc)-L-asparaginyl-[protein] (N-glucan mannose isomer 5A1,2) + 3 beta-D-mannose. It functions in the pathway protein modification; protein glycosylation. In terms of biological role, involved in glycoprotein quality control as it is important for the targeting of misfolded glycoproteins for degradation. It primarily trims a single alpha-1,2-linked mannose residue from Man(9)GlcNAc(2) to produce Man(8)GlcNAc(2), but at high enzyme concentrations it further trims the carbohydrates to Man(5)GlcNAc(2). The chain is Endoplasmic reticulum mannosyl-oligosaccharide 1,2-alpha-mannosidase (MNS1) from Saccharomyces cerevisiae (strain ATCC 204508 / S288c) (Baker's yeast).